Consider the following 162-residue polypeptide: Putative ankyrin repeat protein RBE_0151 (162 aa).

ANK repeat units follow at residues 49-77 (EKWT…NINI), 81-110 (KGRT…VVAP), and 114-145 (YGWS…EHDK).

This Rickettsia bellii (strain RML369-C) protein is Putative ankyrin repeat protein RBE_0151.